The sequence spans 217 residues: GRB2-related adapter protein (217 aa).

The 58-residue stretch at 1–58 folds into the SH3 1 domain; the sequence is MESVALYSFQATESDELAFNKGDTLKILNMEDDQNWYKAELRGVEGFIPKNYIRVKPH. The region spanning 60–154 is the SH2 domain; sequence WYSGRISRQL…QIFLRDEEPL (95 aa). Residues 158–217 enclose the SH3 2 domain; it reads PGACFAQAQFDFSAQDPSQLSFRRGDIIEVLERPDPHWWRGRSCGRVGFFPRSYVQPVHL.

Belongs to the GRB2/sem-5/DRK family. In terms of assembly, associates through its SH2 domain with ligand-activated receptors for stem cell factor (KIT) and erythropoietin (EPOR). Also forms a stable complex with the Bcr-Abl oncoprotein. GRAP is associated with the Ras guanine nucleotide exchange factor SOS1, primarily through its N-terminal SH3 domain. Interacts with phosphorylated LAT upon TCR activation. Interacts with SHB.

Its subcellular location is the membrane. It is found in the synapse. Functionally, couples signals from receptor and cytoplasmic tyrosine kinases to the Ras signaling pathway. Plays a role in the inner ear and in hearing. This chain is GRB2-related adapter protein, found in Homo sapiens (Human).